The primary structure comprises 347 residues: NADH-ubiquinone oxidoreductase chain 2 (347 aa).

The next 10 membrane-spanning stretches (helical) occupy residues 1-21 (MTPM…TLTL), 26-46 (WLLM…LLTY), 56-76 (AIKY…AASL), 96-116 (GIMT…YWVP), 153-171 (ILLT…NGLN), 178-198 (VMAY…IYFP), 199-219 (TLTT…FTVF), 237-257 (APIM…LPPL), 277-297 (IMAT…MRII), and 326-346 (LPTL…FITL).

Belongs to the complex I subunit 2 family. As to quaternary structure, core subunit of respiratory chain NADH dehydrogenase (Complex I) which is composed of 45 different subunits. Interacts with TMEM242.

The protein resides in the mitochondrion inner membrane. The catalysed reaction is a ubiquinone + NADH + 5 H(+)(in) = a ubiquinol + NAD(+) + 4 H(+)(out). Functionally, core subunit of the mitochondrial membrane respiratory chain NADH dehydrogenase (Complex I) which catalyzes electron transfer from NADH through the respiratory chain, using ubiquinone as an electron acceptor. Essential for the catalytic activity and assembly of complex I. In Ornithorhynchus anatinus (Duckbill platypus), this protein is NADH-ubiquinone oxidoreductase chain 2.